The sequence spans 206 residues: HTH-type transcriptional regulator Hpr (206 aa).

An HTH marR-type domain is found at 13 to 157 (ALLFSQRMAQ…MMSIIRHIYG (145 aa)). Residues 63-86 (ISEIAKFGVMHVSTAFNFSKKLEE) constitute a DNA-binding region (H-T-H motif). Positions 177–206 (SEEGKMKKKQEAKEAGESIEVDKPLEPLKN) are disordered. Residues 178–206 (EEGKMKKKQEAKEAGESIEVDKPLEPLKN) show a composition bias toward basic and acidic residues.

In terms of assembly, homodimer.

Negative regulator of protease production and sporulation. The polypeptide is HTH-type transcriptional regulator Hpr (Bacillus licheniformis (strain ATCC 14580 / DSM 13 / JCM 2505 / CCUG 7422 / NBRC 12200 / NCIMB 9375 / NCTC 10341 / NRRL NRS-1264 / Gibson 46)).